The following is a 299-amino-acid chain: MPDNFREGDKQDSQKGRQGARWGQERRLEFIDYRLRWDGQINRSSLTDFFGISVPQASLDLSEYTKLAPDNLEYDMSSRVYRSTKLFQPVYMTSSLECYLNDLLQVAIQPEIHFGSFLGWRSPVAAVPRLLRRLDTDVVSQILRAIRENEAVHVIYQSMSDPQGSKRTLTPHSLVHDGYRWHTRAWCHKRGEYRDFLLSRIVQAQNAGPDEERANGDLAWNTFIKIILIAHPGLCLAQRNLIERDYAMIDGEIHLECRQALLHYLLFQLNLTETQSHQAPEALQLALKNKDEIYALLKQ.

The span at 1–15 (MPDNFREGDKQDSQK) shows a compositional bias: basic and acidic residues. Residues 1–21 (MPDNFREGDKQDSQKGRQGAR) are disordered. Residues 1 to 95 (MPDNFREGDK…LFQPVYMTSS (95 aa)) form a winged HTH domain region. A WYL domain region spans residues 96-207 (LECYLNDLLQ…LSRIVQAQNA (112 aa)). The WYL domain occupies 131 to 211 (LRRLDTDVVS…VQAQNAGPDE (81 aa)). Positions 156 to 200 (YQSMSDPQGSKRTLTPHSLVHDGYRWHTRAWCHKRGEYRDFLLSR) are probable ligand-binding region. The WCX domain stretch occupies residues 208 to 299 (GPDEERANGD…KDEIYALLKQ (92 aa)).

Homodimer.

In terms of biological role, transcriptional regulator of a CBASS antivirus system. CBASS (cyclic oligonucleotide-based antiphage signaling system) provides immunity against bacteriophage. The CD-NTase protein synthesizes cyclic nucleotides in response to infection; these serve as specific second messenger signals. The signals activate a diverse range of effectors, leading to bacterial cell death and thus abortive phage infection. A type III CBASS system. Expression of this CBASS system (Cap18-Cap6-Cap7-CdnC-CapW-Cap17) in a susceptible E.coli (strain MG1655) confers resistance to bacteriophage P1. Binds specifically to and represses expression from the CBASS promoter, found between the genes for divergently transcribed capW and cdnC. This Escherichia coli (strain KTE188) protein is DNA-binding transcriptional repressor CapW.